We begin with the raw amino-acid sequence, 252 residues long: Thiazole synthase (252 aa).

Residue K91 is the Schiff-base intermediate with DXP of the active site. 1-deoxy-D-xylulose 5-phosphate is bound by residues G152, 179 to 180 (AG), and 201 to 202 (NT).

This sequence belongs to the ThiG family. Homotetramer. Forms heterodimers with either ThiH or ThiS.

It is found in the cytoplasm. It carries out the reaction [ThiS sulfur-carrier protein]-C-terminal-Gly-aminoethanethioate + 2-iminoacetate + 1-deoxy-D-xylulose 5-phosphate = [ThiS sulfur-carrier protein]-C-terminal Gly-Gly + 2-[(2R,5Z)-2-carboxy-4-methylthiazol-5(2H)-ylidene]ethyl phosphate + 2 H2O + H(+). It participates in cofactor biosynthesis; thiamine diphosphate biosynthesis. Catalyzes the rearrangement of 1-deoxy-D-xylulose 5-phosphate (DXP) to produce the thiazole phosphate moiety of thiamine. Sulfur is provided by the thiocarboxylate moiety of the carrier protein ThiS. In vitro, sulfur can be provided by H(2)S. The sequence is that of Thiazole synthase from Gluconobacter oxydans (strain 621H) (Gluconobacter suboxydans).